The chain runs to 1207 residues: MAFMFTEHLLFLTLMMCSFSTCEESVSNYSEWAVFTDDIQWLKSQKIQDFKLNRRLHPNLYFDAGDIQTLKQKSRTSHLHIFRAIKSAVTIMLSNPSYYLPPPKHAEFAAKWNEIYGNNLPPLALYCLLCPEDKVAFEFVMEYMDRMVSYKDWLVENAPGDEVPVGHSLTGFATAFDFLYNLLGNQRKQKYLEKIWIVTEEMYEYSKIRSWGKQLLHNHQATNMIALLIGALVTGVDKGSKANIWKQVVVDVMEKTMFLLKHIVDGSLDEGVAYGSYTSKSVTQYVFLAQRHFNINNFDNNWLKMHFWFYYATLLPGYQRTVGIADSNYNWFYGPESQLVFLDKFILQNGAGNWLAQQIRKHRPKDGPMVPSTAQRWSTLHTEYIWYDPTLTPQPPVDFGTAKMHTFPNWGVVTYGGGLPNTQTNTFVSFKSGKLGGRAVYDIVHFQPYSWIDGWRSFNPGHEHPDQNSFTFAPNGQVFVSEALYGPKLSHLNNVLVFAPSPSSQCNQPWEGQLGECAQWLKWTGEEVGDAAGEVITAAQHGDRMFVSGEAVSAYSSAMRLKSVYRALLLLNSQTLLVVDHIERQETSPINSVSAFFHNLDIDFKYIPYKFMNRYNGAMMDVWDAHYKMFWFDHHGNSPVANIQEAEQAAEFKKRWTQFVNVTFHMESTITRIAYVFYGPYVNVSSCRFIDSSSSGLQISLHVNSTEHSVSVVTDYQNLKSRFSYLGFGGFASVANQGQITRFGLGTQEIVNPVRHDKVNFPFGFKFNIAVGFILCISLVILTFQWRFYLSFRKLMRCVLILVIALWFIELLDVWSTCTQPICAKWTRTEAKANEKVMISEGHHVDLPNVIITSLPGSGAEILKQLFFNSSDFLYIRIPTAYMDIPETEFEIDSFVDACEWKVSDIRSGHFHLLRGWLQSLVQDTKLHLQNIHLHETSRSKLAQYFTTNKDKKRKLKRRESLQDQRSRIKGPFDRDAEYIRALRRHLVYYPSARPVLSLSSGSWTLKLHFFQEVLGTSMRALYIVRDPRAWIYSVLYGSKPSLYSLKNVPEHLAKLFKIEEGKSKCNSNSGYAFEYESLKKELEISQSNAISLLSHLWVANTAAALRINTDLLPTNYHLVKFEDIVHFPQKTTERIFAFLGIPLSPASLNQMLFATSTNLFYLPYEGEISPSNTNIWKTNLPRDEIKLIENICWTLMDHLGYPKFMD.

Residues 1 to 22 (MAFMFTEHLLFLTLMMCSFSTC) form the signal peptide. Asn28, Asn661, Asn683, and Asn704 each carry an N-linked (GlcNAc...) asparagine glycan. The next 2 helical transmembrane spans lie at 761–781 (FPFG…SLVI) and 798–818 (CVLI…WSTC). A glycan (N-linked (GlcNAc...) asparagine) is linked at Asn869.

This sequence belongs to the dermatan-sulfate isomerase family.

Its subcellular location is the membrane. The sequence is that of Dermatan-sulfate epimerase-like protein (Dsel) from Mus musculus (Mouse).